The sequence spans 905 residues: Protein translocase subunit SecA (905 aa).

Residues Q89, 107 to 111 (GEGKT), and D502 each bind ATP. Residues C887, C889, C898, and H899 each contribute to the Zn(2+) site.

This sequence belongs to the SecA family. Monomer and homodimer. Part of the essential Sec protein translocation apparatus which comprises SecA, SecYEG and auxiliary proteins SecDF-YajC and YidC. Zn(2+) serves as cofactor.

The protein resides in the cell inner membrane. It localises to the cytoplasm. It carries out the reaction ATP + H2O + cellular proteinSide 1 = ADP + phosphate + cellular proteinSide 2.. Its function is as follows. Part of the Sec protein translocase complex. Interacts with the SecYEG preprotein conducting channel. Has a central role in coupling the hydrolysis of ATP to the transfer of proteins into and across the cell membrane, serving both as a receptor for the preprotein-SecB complex and as an ATP-driven molecular motor driving the stepwise translocation of polypeptide chains across the membrane. The chain is Protein translocase subunit SecA from Rhizobium leguminosarum bv. trifolii (strain WSM2304).